Here is a 33-residue protein sequence, read N- to C-terminus: Cytochrome b6-f complex subunit 8 (33 aa).

Residues 2–22 (LFTFAWASLAAIFTFSIAMVV) traverse the membrane as a helical segment.

This sequence belongs to the PetN family. As to quaternary structure, the 4 large subunits of the cytochrome b6-f complex are cytochrome b6, subunit IV (17 kDa polypeptide, PetD), cytochrome f and the Rieske protein, while the 4 small subunits are PetG, PetL, PetM and PetN. The complex functions as a dimer.

It is found in the cellular thylakoid membrane. Component of the cytochrome b6-f complex, which mediates electron transfer between photosystem II (PSII) and photosystem I (PSI), cyclic electron flow around PSI, and state transitions. This Prochlorococcus marinus (strain MIT 9211) protein is Cytochrome b6-f complex subunit 8.